Consider the following 253-residue polypeptide: Phosphate import ATP-binding protein PstB 1 (253 aa).

Residues 7 to 248 (LTVSDLSLYY…PEKQETSDYI (242 aa)) enclose the ABC transporter domain. 39-46 (GPSGCGKS) lines the ATP pocket.

Belongs to the ABC transporter superfamily. Phosphate importer (TC 3.A.1.7) family. As to quaternary structure, the complex is composed of two ATP-binding proteins (PstB), two transmembrane proteins (PstC and PstA) and a solute-binding protein (PstS).

The protein resides in the cell membrane. The enzyme catalyses phosphate(out) + ATP + H2O = ADP + 2 phosphate(in) + H(+). Part of the ABC transporter complex PstSACB involved in phosphate import. Responsible for energy coupling to the transport system. This Lactococcus lactis subsp. lactis (strain IL1403) (Streptococcus lactis) protein is Phosphate import ATP-binding protein PstB 1.